A 477-amino-acid chain; its full sequence is V-type proton ATPase subunit B (477 aa).

ATP is bound at residue Arg365.

This sequence belongs to the ATPase alpha/beta chains family. V-ATPase is a heteromultimeric enzyme composed of a peripheral catalytic V1 complex (components A to H) attached to an integral membrane V0 proton pore complex (components: a, c, c', c'', d, e, f and VOA1).

The protein resides in the vacuole membrane. Its function is as follows. Non-catalytic subunit of the V1 complex of vacuolar(H+)-ATPase (V-ATPase), a multisubunit enzyme composed of a peripheral complex (V1) that hydrolyzes ATP and a membrane integral complex (V0) that translocates protons. V-ATPase is responsible for acidifying and maintaining the pH of intracellular compartments. This Encephalitozoon cuniculi (strain GB-M1) (Microsporidian parasite) protein is V-type proton ATPase subunit B.